The following is a 214-amino-acid chain: Ependymin (214 aa).

Residues 1-20 (MHTVKLLCVVFSCLCAVAWA) form the signal peptide. Asparagine 70 and asparagine 93 each carry an N-linked (GlcNAc...) asparagine glycan.

The protein belongs to the ependymin family. In terms of assembly, forms disulfide-linked dimers. Binds calcium through the terminal sialic acids.

The protein localises to the secreted. May play a role in neural plasticity. May be involved during axon regeneration. This is Ependymin (epd) from Notemigonus crysoleucas (Golden shiner).